Reading from the N-terminus, the 2208-residue chain is Glutamate synthase 1 [NADH], chloroplastic (2208 aa).

The transit peptide at 1-49 directs the protein to the chloroplast; the sequence is MSAASSSSVLHLRTNQQLLSLRSLKNSTSVASQLAVTSGVSRRRSCTAR. The active-site Nucleophile is the cysteine 117. Positions 117 to 521 constitute a Glutamine amidotransferase type-2 domain; the sequence is CGVGFVAELS…PGMMLLVDFE (405 aa). The interval 1040–1067 is disordered; sequence GKSNTGEGGELPSRMEPLADGSRNPKRS. 1211–1268 serves as a coordination point for FMN; it reads LAETHQTLVANDLRGRTVLQTDGQLKTGRDVAVAALLGAEEFGFSTAPLITLGCIMMR. [3Fe-4S] cluster-binding residues include cysteine 1264, cysteine 1270, and cysteine 1275. 1995–2009 contacts NAD(+); that stretch reads GGGDTGTDCIGTSIR.

It belongs to the glutamate synthase family. As to quaternary structure, monomer. [3Fe-4S] cluster is required as a cofactor. The cofactor is FAD. FMN serves as cofactor. Highly expressed in roots and at low levels in leaves.

The protein localises to the plastid. It localises to the chloroplast. The catalysed reaction is 2 L-glutamate + NAD(+) = L-glutamine + 2-oxoglutarate + NADH + H(+). It participates in amino-acid biosynthesis; L-glutamate biosynthesis via GLT pathway; L-glutamate from 2-oxoglutarate and L-glutamine (NAD(+) route): step 1/1. Its pathway is energy metabolism; nitrogen metabolism. Involved in glutamate biosynthesis. Required for non-photorespiratory ammonium assimilation. Probably involved in primary ammonium assimilation in roots. This Arabidopsis thaliana (Mouse-ear cress) protein is Glutamate synthase 1 [NADH], chloroplastic (GLT1).